The primary structure comprises 399 residues: Succinate--CoA ligase [ADP-forming] subunit beta (399 aa).

In terms of domain architecture, ATP-grasp spans 9–254 (KELLAKFGVA…ETEEDPAEIE (246 aa)). ATP is bound by residues Lys-46, 53 to 55 (GRG), Ala-112, and Glu-117. Positions 209 and 223 each coordinate Mg(2+). Residues Asn-274 and 331-333 (GIM) contribute to the substrate site.

Belongs to the succinate/malate CoA ligase beta subunit family. As to quaternary structure, heterotetramer of two alpha and two beta subunits. Mg(2+) is required as a cofactor.

It catalyses the reaction succinate + ATP + CoA = succinyl-CoA + ADP + phosphate. The catalysed reaction is GTP + succinate + CoA = succinyl-CoA + GDP + phosphate. It functions in the pathway carbohydrate metabolism; tricarboxylic acid cycle; succinate from succinyl-CoA (ligase route): step 1/1. Its function is as follows. Succinyl-CoA synthetase functions in the citric acid cycle (TCA), coupling the hydrolysis of succinyl-CoA to the synthesis of either ATP or GTP and thus represents the only step of substrate-level phosphorylation in the TCA. The beta subunit provides nucleotide specificity of the enzyme and binds the substrate succinate, while the binding sites for coenzyme A and phosphate are found in the alpha subunit. The chain is Succinate--CoA ligase [ADP-forming] subunit beta from Rhizorhabdus wittichii (strain DSM 6014 / CCUG 31198 / JCM 15750 / NBRC 105917 / EY 4224 / RW1) (Sphingomonas wittichii).